The sequence spans 289 residues: MQSLQDNITSRLEAVDGEGRFVEDLWEREEGGGGRSRILTEGRVFERAGIGFSEVHGSHLPPSILQQRPEAEGHPFYVTGTSMVLHPRNPYVPTVHLNYRYFEAGPVWWFGGGADLTPYYGFVEDAAHFHATLKAACDAHDPEYYPRFKKWCDEYFYLKHRQEPRGVGGIFFDYVQGDWEKIFAFAQSCGNAFLPAYLPIVERRHTLPYAERERNFQLYRRGRYVEFNLVWDRGTIFGLQTNGRIESILMSMPPLVRWEYNYRPEPGTAEAELYEVFLVPQDWASQAKR.

Position 82 (Ser-82) interacts with substrate. A divalent metal cation contacts are provided by His-86 and His-96. The Proton donor role is filled by His-96. 98 to 100 is a substrate binding site; it reads NYR. 2 residues coordinate a divalent metal cation: His-130 and His-160. Residues 224–259 form an important for dimerization region; sequence YVEFNLVWDRGTIFGLQTNGRIESILMSMPPLVRWE.

The protein belongs to the aerobic coproporphyrinogen-III oxidase family. As to quaternary structure, homodimer. It depends on a divalent metal cation as a cofactor.

It is found in the cytoplasm. The enzyme catalyses coproporphyrinogen III + O2 + 2 H(+) = protoporphyrinogen IX + 2 CO2 + 2 H2O. It functions in the pathway porphyrin-containing compound metabolism; protoporphyrin-IX biosynthesis; protoporphyrinogen-IX from coproporphyrinogen-III (O2 route): step 1/1. Functionally, involved in the heme and chlorophyll biosynthesis. Catalyzes the aerobic oxidative decarboxylation of propionate groups of rings A and B of coproporphyrinogen-III to yield the vinyl groups in protoporphyrinogen-IX. This Gloeobacter violaceus (strain ATCC 29082 / PCC 7421) protein is Oxygen-dependent coproporphyrinogen-III oxidase.